Here is a 73-residue protein sequence, read N- to C-terminus: MKLTCVVIVAVLLLTACQLITADDSRGTQKHRALRSDTKLSMSTRCKSKGAKCSKLMYDCCSGSCSGTVGRCG.

A signal peptide spans 1-22; that stretch reads MKLTCVVIVAVLLLTACQLITA. A propeptide spanning residues 23–45 is cleaved from the precursor; sequence DDSRGTQKHRALRSDTKLSMSTR. Intrachain disulfides connect Cys46/Cys61, Cys53/Cys65, and Cys60/Cys72. At Cys72 the chain carries Cysteine amide.

It belongs to the conotoxin O1 superfamily. In terms of tissue distribution, expressed by the venom duct.

It localises to the secreted. Omega-conotoxins act at presynaptic membranes, they bind and block voltage-gated calcium channels. This toxin inhibits neurotransmitter release, it blocks N-type calcium channels, probably a N-type (Cav2.2/CACNA1B) calcium channel variant. This Conus catus (Cat cone) protein is Omega-conotoxin CVID.